Reading from the N-terminus, the 59-residue chain is Small, acid-soluble spore protein H 2 (59 aa).

This sequence belongs to the SspH family.

It is found in the spore core. The chain is Small, acid-soluble spore protein H 2 from Bacillus cytotoxicus (strain DSM 22905 / CIP 110041 / 391-98 / NVH 391-98).